A 385-amino-acid chain; its full sequence is Acetylornithine deacetylase (385 aa).

His80 is a Zn(2+) binding site. Asp82 is a catalytic residue. Asp112 lines the Zn(2+) pocket. The active-site Proton acceptor is Glu144. Positions 145, 169, and 355 each coordinate Zn(2+).

This sequence belongs to the peptidase M20A family. ArgE subfamily. In terms of assembly, homodimer. Zn(2+) is required as a cofactor. The cofactor is Co(2+). Requires glutathione as cofactor.

Its subcellular location is the cytoplasm. The enzyme catalyses N(2)-acetyl-L-ornithine + H2O = L-ornithine + acetate. It participates in amino-acid biosynthesis; L-arginine biosynthesis; L-ornithine from N(2)-acetyl-L-ornithine (linear): step 1/1. Functionally, catalyzes the hydrolysis of the amide bond of N(2)-acetylated L-amino acids. Cleaves the acetyl group from N-acetyl-L-ornithine to form L-ornithine, an intermediate in L-arginine biosynthesis pathway, and a branchpoint in the synthesis of polyamines. This is Acetylornithine deacetylase from Photorhabdus laumondii subsp. laumondii (strain DSM 15139 / CIP 105565 / TT01) (Photorhabdus luminescens subsp. laumondii).